A 270-amino-acid chain; its full sequence is Elongation factor Ts (270 aa).

Residues 76-79 (TDFV) form an involved in Mg(2+) ion dislocation from EF-Tu region.

This sequence belongs to the EF-Ts family.

The protein resides in the cytoplasm. Its function is as follows. Associates with the EF-Tu.GDP complex and induces the exchange of GDP to GTP. It remains bound to the aminoacyl-tRNA.EF-Tu.GTP complex up to the GTP hydrolysis stage on the ribosome. The chain is Elongation factor Ts from Corynebacterium aurimucosum (strain ATCC 700975 / DSM 44827 / CIP 107346 / CN-1) (Corynebacterium nigricans).